Consider the following 592-residue polypeptide: Methionine--tRNA ligase (592 aa).

The short motif at 12–22 is the 'HIGH' region element; that stretch reads PYANGPFHVGH. Zn(2+) contacts are provided by Cys144, Cys147, Cys157, and Cys160. The 'KMSKS' region signature appears at 342 to 346; it reads KMSTS. Thr345 provides a ligand contact to ATP.

It belongs to the class-I aminoacyl-tRNA synthetase family. MetG type 1 subfamily. Monomer. It depends on Zn(2+) as a cofactor.

It localises to the cytoplasm. The enzyme catalyses tRNA(Met) + L-methionine + ATP = L-methionyl-tRNA(Met) + AMP + diphosphate. Is required not only for elongation of protein synthesis but also for the initiation of all mRNA translation through initiator tRNA(fMet) aminoacylation. The chain is Methionine--tRNA ligase from Roseiflexus sp. (strain RS-1).